The chain runs to 582 residues: Cryptochrome-2 (582 aa).

The 130-residue stretch at 12-141 (CRSVHWFRRG…EVVIENSHTL (130 aa)) folds into the Photolyase/cryptochrome alpha/beta domain. FAD contacts are provided by residues Ser-261, Gln-298, His-364, and 396 to 398 (DAD). Positions 521-559 (GPVTDSAPGQGSSTSTAVRLPQSDQASPKRKHEGAEELC) are disordered. A compositionally biased stretch (polar residues) spans 527 to 546 (APGQGSSTSTAVRLPQSDQA).

The protein belongs to the DNA photolyase class-1 family. As to quaternary structure, component of the circadian core oscillator, which includes the CRY proteins, CLOCK or NPAS2, BMAL1 or BMAL2, CSNK1E, and the PER proteins. FAD serves as cofactor. (6R)-5,10-methylene-5,6,7,8-tetrahydrofolate is required as a cofactor. In terms of tissue distribution, expressed in the pineal gland.

Its subcellular location is the cytoplasm. It is found in the nucleus. Its function is as follows. Transcriptional repressor which forms a core component of the circadian clock. The circadian clock, an internal time-keeping system, regulates various physiological processes through the generation of approximately 24 hour circadian rhythms in gene expression, which are translated into rhythms in metabolism and behavior. It is derived from the Latin roots 'circa' (about) and 'diem' (day) and acts as an important regulator of a wide array of physiological functions including metabolism, sleep, body temperature, blood pressure, endocrine, immune, cardiovascular, and renal function. Consists of two major components: the central clock, residing in the suprachiasmatic nucleus (SCN) of the brain, and the peripheral clocks that are present in nearly every tissue and organ system. Both the central and peripheral clocks can be reset by environmental cues, also known as Zeitgebers (German for 'timegivers'). The predominant Zeitgeber for the central clock is light, which is sensed by retina and signals directly to the SCN. The central clock entrains the peripheral clocks through neuronal and hormonal signals, body temperature and feeding-related cues, aligning all clocks with the external light/dark cycle. Circadian rhythms allow an organism to achieve temporal homeostasis with its environment at the molecular level by regulating gene expression to create a peak of protein expression once every 24 hours to control when a particular physiological process is most active with respect to the solar day. Transcription and translation of core clock components (CLOCK, NPAS2, BMAL1, BMAL2, PER1, PER2, PER3, CRY1 and CRY2) plays a critical role in rhythm generation, whereas delays imposed by post-translational modifications (PTMs) are important for determining the period (tau) of the rhythms (tau refers to the period of a rhythm and is the length, in time, of one complete cycle). A diurnal rhythm is synchronized with the day/night cycle, while the ultradian and infradian rhythms have a period shorter and longer than 24 hours, respectively. Disruptions in the circadian rhythms contribute to the pathology of cardiovascular diseases, cancer, metabolic syndromes and aging. A transcription/translation feedback loop (TTFL) forms the core of the molecular circadian clock mechanism. Transcription factors, CLOCK or NPAS2 and BMAL1 or BMAL2, form the positive limb of the feedback loop, act in the form of a heterodimer and activate the transcription of core clock genes and clock-controlled genes (involved in key metabolic processes), harboring E-box elements (5'-CACGTG-3') within their promoters. The core clock genes: PER1/2/3 and CRY1/2 which are transcriptional repressors form the negative limb of the feedback loop and interact with the CLOCK|NPAS2-BMAL1|BMAL2 heterodimer inhibiting its activity and thereby negatively regulating their own expression. This heterodimer also activates nuclear receptors NR1D1/2, RORA/B/G, which form a second feedback loop and which activate and repress BMAL1 transcription, respectively. CRY1 and CRY2 have redundant functions but also differential and selective contributions at least in defining the pace of the SCN circadian clock and its circadian transcriptional outputs. Less potent transcriptional repressor in cerebellum and liver than CRY1, though less effective in lengthening the period of the SCN oscillator. Seems to play a critical role in tuning SCN circadian period by opposing the action of CRY1. With CRY1, dispensable for circadian rhythm generation but necessary for the development of intercellular networks for rhythm synchrony. Represses CLOCK-BMAL1-mediated transcriptional activation. The protein is Cryptochrome-2 (CRY2) of Gallus gallus (Chicken).